Here is a 405-residue protein sequence, read N- to C-terminus: Putative arsenical pump-driving ATPase (405 aa).

8-15 (GKGGVGKT) provides a ligand contact to ATP.

This sequence belongs to the arsA ATPase family.

The catalysed reaction is arsenite(in) + ATP + H2O = arsenite(out) + ADP + phosphate + H(+). In terms of biological role, anion-transporting ATPase. Catalyzes the extrusion of arsenite. The chain is Putative arsenical pump-driving ATPase from Prosthecochloris vibrioformis (Chlorobium vibrioforme).